Consider the following 310-residue polypeptide: 4-hydroxy-3-methylbut-2-enyl diphosphate reductase (310 aa).

Position 13 (Cys-13) interacts with [4Fe-4S] cluster. (2E)-4-hydroxy-3-methylbut-2-enyl diphosphate is bound by residues His-42 and His-75. Residues His-42 and His-75 each contribute to the dimethylallyl diphosphate site. Isopentenyl diphosphate-binding residues include His-42 and His-75. Cys-97 lines the [4Fe-4S] cluster pocket. His-125 is a binding site for (2E)-4-hydroxy-3-methylbut-2-enyl diphosphate. A dimethylallyl diphosphate-binding site is contributed by His-125. Isopentenyl diphosphate is bound at residue His-125. The Proton donor role is filled by Glu-127. Thr-165 is a binding site for (2E)-4-hydroxy-3-methylbut-2-enyl diphosphate. Cys-195 is a binding site for [4Fe-4S] cluster. Residues Ser-223, Ser-224, Asn-225, and Ser-267 each contribute to the (2E)-4-hydroxy-3-methylbut-2-enyl diphosphate site. 4 residues coordinate dimethylallyl diphosphate: Ser-223, Ser-224, Asn-225, and Ser-267. 4 residues coordinate isopentenyl diphosphate: Ser-223, Ser-224, Asn-225, and Ser-267.

Belongs to the IspH family. [4Fe-4S] cluster is required as a cofactor.

It carries out the reaction isopentenyl diphosphate + 2 oxidized [2Fe-2S]-[ferredoxin] + H2O = (2E)-4-hydroxy-3-methylbut-2-enyl diphosphate + 2 reduced [2Fe-2S]-[ferredoxin] + 2 H(+). It catalyses the reaction dimethylallyl diphosphate + 2 oxidized [2Fe-2S]-[ferredoxin] + H2O = (2E)-4-hydroxy-3-methylbut-2-enyl diphosphate + 2 reduced [2Fe-2S]-[ferredoxin] + 2 H(+). Its pathway is isoprenoid biosynthesis; dimethylallyl diphosphate biosynthesis; dimethylallyl diphosphate from (2E)-4-hydroxy-3-methylbutenyl diphosphate: step 1/1. It functions in the pathway isoprenoid biosynthesis; isopentenyl diphosphate biosynthesis via DXP pathway; isopentenyl diphosphate from 1-deoxy-D-xylulose 5-phosphate: step 6/6. Its function is as follows. Catalyzes the conversion of 1-hydroxy-2-methyl-2-(E)-butenyl 4-diphosphate (HMBPP) into a mixture of isopentenyl diphosphate (IPP) and dimethylallyl diphosphate (DMAPP). Acts in the terminal step of the DOXP/MEP pathway for isoprenoid precursor biosynthesis. This Chlamydia pneumoniae (Chlamydophila pneumoniae) protein is 4-hydroxy-3-methylbut-2-enyl diphosphate reductase.